The chain runs to 70 residues: DNA-directed RNA polymerase subunit epsilon (70 aa).

It belongs to the RNA polymerase subunit epsilon family. RNAP is composed of a core of 2 alpha, a beta and a beta' subunit. The core is associated with a delta subunit, and at least one of epsilon or omega. When a sigma factor is associated with the core the holoenzyme is formed, which can initiate transcription.

It catalyses the reaction RNA(n) + a ribonucleoside 5'-triphosphate = RNA(n+1) + diphosphate. In terms of biological role, a non-essential component of RNA polymerase (RNAP). This is DNA-directed RNA polymerase subunit epsilon from Limosilactobacillus reuteri (strain DSM 20016) (Lactobacillus reuteri).